A 287-amino-acid polypeptide reads, in one-letter code: mRNA-capping enzyme regulatory subunit OPG124 (287 aa).

Belongs to the orthopoxvirus mRNA-capping enzyme regulatory subunit family. Interacts with the late transcription elongation factor VLTF-4/OPG110. Interacts with the late transcription factors VLTF-1.

Its subcellular location is the virion. Acts with RNA polymerase to initiate transcription from late gene promoters. This is mRNA-capping enzyme regulatory subunit OPG124 (OPG124) from Monkeypox virus.